The sequence spans 115 residues: Cysteine-rich venom protein 5 (115 aa).

The N-terminal stretch at 1–22 (MSKVMIIMLVGMIFAIISTVSG) is a signal peptide. 3 disulfide bridges follow: Cys26–Cys41, Cys33–Cys44, and Cys40–Cys51. Positions 54-115 (RIGPPINTQP…RKPTNRPRSH (62 aa)) are disordered. Basic residues-rich tracts occupy residues 68–77 (QPTRRTRGPK) and 86–115 (NRTR…PRSH).

In terms of tissue distribution, expressed by the venom gland.

The protein localises to the secreted. The chain is Cysteine-rich venom protein 5 from Pimpla hypochondriaca (Parasitoid wasp).